Consider the following 226-residue polypeptide: ATP synthase F(0) complex subunit a (226 aa).

A run of 5 helical transmembrane segments spans residues 5–25, 68–88, 97–117, 136–156, and 189–209; these read LFAP…LIII, WSLM…LGML, QLSM…TTGF, FLIP…PVAW, and AFIT…VALI.

This sequence belongs to the ATPase A chain family. As to quaternary structure, component of the ATP synthase complex composed at least of ATP5F1A/subunit alpha, ATP5F1B/subunit beta, ATP5MC1/subunit c (homooctomer), MT-ATP6/subunit a, MT-ATP8/subunit 8, ATP5ME/subunit e, ATP5MF/subunit f, ATP5MG/subunit g, ATP5MK/subunit k, ATP5MJ/subunit j, ATP5F1C/subunit gamma, ATP5F1D/subunit delta, ATP5F1E/subunit epsilon, ATP5PF/subunit F6, ATP5PB/subunit b, ATP5PD/subunit d, ATP5PO/subunit OSCP. ATP synthase complex consists of a soluble F(1) head domain (subunits alpha(3) and beta(3)) - the catalytic core - and a membrane F(0) domain - the membrane proton channel (subunits c, a, 8, e, f, g, k and j). These two domains are linked by a central stalk (subunits gamma, delta, and epsilon) rotating inside the F1 region and a stationary peripheral stalk (subunits F6, b, d, and OSCP). Interacts with DNAJC30; interaction is direct.

Its subcellular location is the mitochondrion inner membrane. The catalysed reaction is H(+)(in) = H(+)(out). Subunit a, of the mitochondrial membrane ATP synthase complex (F(1)F(0) ATP synthase or Complex V) that produces ATP from ADP in the presence of a proton gradient across the membrane which is generated by electron transport complexes of the respiratory chain. ATP synthase complex consist of a soluble F(1) head domain - the catalytic core - and a membrane F(1) domain - the membrane proton channel. These two domains are linked by a central stalk rotating inside the F(1) region and a stationary peripheral stalk. During catalysis, ATP synthesis in the catalytic domain of F(1) is coupled via a rotary mechanism of the central stalk subunits to proton translocation. With the subunit c (ATP5MC1), forms the proton-conducting channel in the F(0) domain, that contains two crucial half-channels (inlet and outlet) that facilitate proton movement from the mitochondrial intermembrane space (IMS) into the matrix. Protons are taken up via the inlet half-channel and released through the outlet half-channel, following a Grotthuss mechanism. This Balaenoptera physalus (Fin whale) protein is ATP synthase F(0) complex subunit a.